The chain runs to 23 residues: Coenzyme PQQ synthesis protein A (23 aa).

Residues 15–19 (EVTLY) constitute a cross-link (pyrroloquinoline quinone (Glu-Tyr)).

It belongs to the PqqA family.

It participates in cofactor biosynthesis; pyrroloquinoline quinone biosynthesis. Functionally, required for coenzyme pyrroloquinoline quinone (PQQ) biosynthesis. PQQ is probably formed by cross-linking a specific glutamate to a specific tyrosine residue and excising these residues from the peptide. This chain is Coenzyme PQQ synthesis protein A, found in Klebsiella pneumoniae (strain 342).